Reading from the N-terminus, the 438-residue chain is Alkylcitrate synthase tstJ (438 aa).

Active-site residues include H309 and D365.

Belongs to the citrate synthase family.

The catalysed reaction is (2E,10E)-dode-2,10-dicenoyl-CoA + oxaloacetate + H2O = (4E,11E)-2-hydroxytrideca-4,11-dien-1,2,3-tricarboxylate + CoA + H(+). It functions in the pathway secondary metabolite biosynthesis. In terms of biological role, alkylcitrate synthase; part of the gene cluster that mediates the biosynthesis of the antihypercholesterolemic agents phomoidrides which are dimeric anhydrides. Within the pathway, the alkylcitrate synthase (ACS) tstJ and the alkylcitrate dehydratase (ACDH) tstI produce the decarboxylated monomeric anhydrides by coupling the C12-fatty acyl product from phiA with oxalacetic acid. The pathway begins with the highly reducing polyketide synthase tstA that catalyzes the formation of a C12-fatty acyl-ACP, starting from one acetate and 5 malonate units. The hydrolase tstM is involved in the release of the C12-fatty acyl chain from phiA. The alkylcitrate synthase (ACS) tstJ and the alkylcitrate dehydratase (ACDH) tstI then give rise to decarboxylated monomeric anhydrides by coupling the C12-fatty acyl chain with oxalacetic acid. The cyclase tstC is responsible for the dimerization of the monomeric anhydrides which leads to the production of prephomoidride that contains the characteristic bicyclo[4.3.1]deca-1,6-diene system of phomoidrides. Iterative oxidation catalyzed by the alpha-ketoglutarate-dependent dioxygenase tstK produced then phomoidride A. Finally, the methyltransferase tstE converts phomoidride A to phomoidride B via an acetalization reaction. The phosphatidylethanolamine-binding protein tstB and tstN are not essential for dimerization and their functions have still to be determined. The sequence is that of Alkylcitrate synthase tstJ from Talaromyces stipitatus (strain ATCC 10500 / CBS 375.48 / QM 6759 / NRRL 1006) (Penicillium stipitatum).